Reading from the N-terminus, the 301-residue chain is tRNA dimethylallyltransferase (301 aa).

2 to 9 (GPTASGKT) lines the ATP pocket. 4 to 9 (TASGKT) serves as a coordination point for substrate. Interaction with substrate tRNA regions lie at residues 27 to 30 (DSAM) and 151 to 155 (QRIQR).

Belongs to the IPP transferase family. In terms of assembly, monomer. Requires Mg(2+) as cofactor.

The enzyme catalyses adenosine(37) in tRNA + dimethylallyl diphosphate = N(6)-dimethylallyladenosine(37) in tRNA + diphosphate. Catalyzes the transfer of a dimethylallyl group onto the adenine at position 37 in tRNAs that read codons beginning with uridine, leading to the formation of N6-(dimethylallyl)adenosine (i(6)A). In Coxiella burnetii (strain CbuK_Q154) (Coxiella burnetii (strain Q154)), this protein is tRNA dimethylallyltransferase.